The sequence spans 123 residues: Ribosome-binding factor A (123 aa).

This sequence belongs to the RbfA family. Monomer. Binds 30S ribosomal subunits, but not 50S ribosomal subunits or 70S ribosomes.

Its subcellular location is the cytoplasm. One of several proteins that assist in the late maturation steps of the functional core of the 30S ribosomal subunit. Associates with free 30S ribosomal subunits (but not with 30S subunits that are part of 70S ribosomes or polysomes). Required for efficient processing of 16S rRNA. May interact with the 5'-terminal helix region of 16S rRNA. This is Ribosome-binding factor A from Lactobacillus gasseri (strain ATCC 33323 / DSM 20243 / BCRC 14619 / CIP 102991 / JCM 1131 / KCTC 3163 / NCIMB 11718 / NCTC 13722 / AM63).